A 278-amino-acid polypeptide reads, in one-letter code: Mediator of RNA polymerase II transcription subunit 4 (278 aa).

Residues 57-88 (HARILTLRAQVEALEEQKKSSVTALATLRHEL) are a coiled coil. Disordered stretches follow at residues 120-181 (VPPT…EEEE) and 240-278 (VEAP…DLDD). 2 stretches are compositionally biased toward basic and acidic residues: residues 124–142 (YRER…KDDA) and 160–172 (DAPK…DNKP). Over residues 250–268 (AEPVQAQAPRPARPAQPQA) the composition is skewed to low complexity.

This sequence belongs to the Mediator complex subunit 4 family. As to quaternary structure, component of the Mediator complex.

It localises to the nucleus. Its function is as follows. Component of the Mediator complex, a coactivator involved in the regulated transcription of nearly all RNA polymerase II-dependent genes. Mediator functions as a bridge to convey information from gene-specific regulatory proteins to the basal RNA polymerase II transcription machinery. Mediator is recruited to promoters by direct interactions with regulatory proteins and serves as a scaffold for the assembly of a functional preinitiation complex with RNA polymerase II and the general transcription factors. The protein is Mediator of RNA polymerase II transcription subunit 4 (MED4) of Phaeosphaeria nodorum (strain SN15 / ATCC MYA-4574 / FGSC 10173) (Glume blotch fungus).